The sequence spans 776 residues: MASLIYRQLLGNSYAVDLSDETQEIGASRNQNVTVNPGPFAQTNYAPVSWGPGEVRDSTTVEPLLDGPYQPTTFNPPVDYWMLLAPTDRGVVVEGTNNTNRWLAIILVEPDVPTEERTYTLFGQQAQITVANDSQLKWKFIVVSKQTLDGAYAQYGPLLSATKLYAVMKHSGRIYTYSGETPNATTAYYSTTNYDTVNMKAYCHFYIIPRTQESKCTEYINTGLPPIQNTRNVIPVSITSRDIQYTRAQVNEDILISKASLWKEMQYNRDIIIRFQIANSIVKSGGLGYKWSEISFKPANYQYSYIRDDEEVTSATTCSVNGVNEFSYSGGSLPTDFAVSKYEVIKENSFVYVDYWDDSQAFRNMVYVRSLAANLNSVMCTGGDFSFALPVGHYPVMTGGAVTLHSAGVTLSTQFTDFVSLNSLRFRFSLSVEEPPFSIIRTRVSGLYGLPATKPNNSQEYYEIAGRFSLISLVPSNDDYQTPIMNSVTVRQDLERQLSELRDEFNSLSQQIAMSQLIDLALLPLDMFSMFSGIKSTIDAAKSMVTNVMKKFKKSSLANSVSTLTNSLSDAASSVSRSSSIRSIGSTASAWTDVSITASDVSTATNSIATQTSTISKRLRLKEMATQTDGMNFDDISAEMLKTKIDKSTQITADTLPEMITEASEKFIPNRTYRIINNDEVFETSIDGKYFAYRVDTFEEIPFDVQKFADLVTDSPVISAIIDFKTLKKLNDNYGITKEQAFNLLRSDPKVLREFINQNNPIIKNRIENLIMQCRL.

Positions 65-224 (LDGPYQPTTF…KCTEYINTGL (160 aa)) are spike head. Intrachain disulfides connect cysteine 203/cysteine 216 and cysteine 318/cysteine 380. Positions 248–479 (AQVNEDILIS…LISLVPSNDD (232 aa)) are spike body and stalk (antigen domain). The hydrophobic; possible role in virus entry into host cell stretch occupies residues 389-409 (LPVGHYPVMTGGAVTLHSAGV). The YGL motif; interaction with ITGA4 signature appears at 448–450 (YGL). The stretch at 484–511 (IMNSVTVRQDLERQLSELRDEFNSLSQQ) forms a coiled coil. Residues 510–776 (QQIAMSQLID…IENLIMQCRL (267 aa)) are spike foot. The KID motif; interaction with HSPA8 signature appears at 644 to 646 (KID).

Belongs to the rotavirus VP4 family. As to quaternary structure, homotrimer. VP4 adopts a dimeric appearance above the capsid surface, while forming a trimeric base anchored inside the capsid layer. Only hints of the third molecule are observed above the capsid surface. It probably performs a series of molecular rearrangements during viral entry. Prior to trypsin cleavage, it is flexible. The priming trypsin cleavage triggers its rearrangement into rigid spikes with approximate two-fold symmetry of their protruding parts. After an unknown second triggering event, cleaved VP4 may undergo another rearrangement, in which two VP5* subunits fold back on themselves and join a third subunit to form a tightly associated trimer, shaped like a folded umbrella. Interacts with VP6. Interacts with VP7. In terms of assembly, homotrimer. The trimer is coiled-coil stabilized by its C-terminus, however, its N-terminus, known as antigen domain or 'body', seems to be flexible allowing it to self-associate either as a dimer or a trimer. In terms of processing, proteolytic cleavage by trypsin results in activation of VP4 functions and greatly increases infectivity. The penetration into the host cell is dependent on trypsin treatment of VP4. It produces two peptides, VP5* and VP8* that remain associated with the virion. Cleavage of VP4 by trypsin probably occurs in vivo in the lumen of the intestine prior to infection of enterocytes. Trypsin seems to be incorporated into the three-layered viral particles but remains inactive as long as the viral outer capsid is intact and would only be activated upon the solubilization of the latter.

The protein resides in the virion. The protein localises to the host rough endoplasmic reticulum. It localises to the host cell membrane. Its subcellular location is the host cytoplasm. It is found in the host cytoskeleton. The protein resides in the host endoplasmic reticulum-Golgi intermediate compartment. In terms of biological role, spike-forming protein that mediates virion attachment to the host epithelial cell receptors and plays a major role in cell penetration, determination of host range restriction and virulence. Rotavirus attachment and entry into the host cell probably involves multiple sequential contacts between the outer capsid proteins VP4 and VP7, and the cell receptors. It is subsequently lost, together with VP7, following virus entry into the host cell. Following entry into the host cell, low intracellular or intravesicular Ca(2+) concentration probably causes the calcium-stabilized VP7 trimers to dissociate from the virion. This step is probably necessary for the membrane-disrupting entry step and the release of VP4, which is locked onto the virion by VP7. During the virus exit from the host cell, VP4 seems to be required to target the newly formed virions to the host cell lipid rafts. Forms the spike 'foot' and 'body' and acts as a membrane permeabilization protein that mediates release of viral particles from endosomal compartments into the cytoplasm. During entry, the part of VP5* that protrudes from the virus folds back on itself and reorganizes from a local dimer to a trimer. This reorganization may be linked to membrane penetration by exposing VP5* hydrophobic region. In integrin-dependent strains, VP5* targets the integrin heterodimer ITGA2/ITGB1 for cell attachment. Its function is as follows. Forms the head of the spikes and mediates the recognition of specific host cell surface glycans. It is the viral hemagglutinin and an important target of neutralizing antibodies. In sialic acid-dependent strains, VP8* binds to host cell sialic acid, most probably a ganglioside, providing the initial contact. In some other strains, VP8* mediates the attachment to histo-blood group antigens (HBGAs) for viral entry. The protein is Outer capsid protein VP4 of Rotavirus A (isolate RVA/Equine/United Kingdom/L338/1988/G13P12[18]) (RV-A).